A 324-amino-acid chain; its full sequence is NADH-ubiquinone oxidoreductase chain 1 (324 aa).

Helical transmembrane passes span 10–30, 76–96, 107–127, 143–163, 178–198, 229–249, 260–280, and 300–320; these read MIMTLSYIIPILIAVAFLTLV, FLFIMTPILALLLALTIWIPL, LGLLFLLAMSSLTVYSLLWSG, VAQTISYEVTLAIILLSTIML, PIYLIFSSWPLAMMWYISTLA, LFFLAEYANIMLMNTLTITLF, ELFSITLATKVLLLSSSFLWV, and FLPLTLALCLWHTSMPISYAG.

The protein belongs to the complex I subunit 1 family.

The protein localises to the mitochondrion inner membrane. The enzyme catalyses a ubiquinone + NADH + 5 H(+)(in) = a ubiquinol + NAD(+) + 4 H(+)(out). Functionally, core subunit of the mitochondrial membrane respiratory chain NADH dehydrogenase (Complex I) that is believed to belong to the minimal assembly required for catalysis. Complex I functions in the transfer of electrons from NADH to the respiratory chain. The immediate electron acceptor for the enzyme is believed to be ubiquinone. The chain is NADH-ubiquinone oxidoreductase chain 1 (MT-ND1) from Excalfactoria chinensis (Blue-breasted quail).